A 307-amino-acid polypeptide reads, in one-letter code: Nitrogenase iron protein 2 (307 aa).

Residue Gly-13–Ser-20 coordinates ATP. Cys-101 contacts [4Fe-4S] cluster. Arg-104 carries the post-translational modification ADP-ribosylarginine; by dinitrogenase reductase ADP-ribosyltransferase. Cys-135 is a [4Fe-4S] cluster binding site. Residues Gln-285–Ala-307 are disordered.

Belongs to the NifH/BchL/ChlL family. Homodimer. [4Fe-4S] cluster is required as a cofactor. The reversible ADP-ribosylation of Arg-104 inactivates the nitrogenase reductase and regulates nitrogenase activity.

The catalysed reaction is N2 + 8 reduced [2Fe-2S]-[ferredoxin] + 16 ATP + 16 H2O = H2 + 8 oxidized [2Fe-2S]-[ferredoxin] + 2 NH4(+) + 16 ADP + 16 phosphate + 6 H(+). The key enzymatic reactions in nitrogen fixation are catalyzed by the nitrogenase complex, which has 2 components: the iron protein and the molybdenum-iron protein. This is Nitrogenase iron protein 2 (nifH2) from Mastigocladus laminosus (Fischerella sp.).